We begin with the raw amino-acid sequence, 85 residues long: Large ribosomal subunit protein bL27 (85 aa).

Positions 1–21 (MAHKKAGGSTRNGRDSESKRL) are disordered.

Belongs to the bacterial ribosomal protein bL27 family.

The polypeptide is Large ribosomal subunit protein bL27 (Ectopseudomonas mendocina (strain ymp) (Pseudomonas mendocina)).